Consider the following 264-residue polypeptide: DNA repair protein RecO (264 aa).

This sequence belongs to the RecO family.

Its function is as follows. Involved in DNA repair and RecF pathway recombination. This is DNA repair protein RecO from Leuconostoc citreum (strain KM20).